A 125-amino-acid polypeptide reads, in one-letter code: Flagellar protein FliT (125 aa).

The required for homodimerization stretch occupies residues 1–50; it reads MDNKMDLLSAYQRILSLSEQMLNLAKNEKWDELVDMEITYLKAVEVISHS. Positions 60-98 are fliD binding; sequence LQQKMTNILQIILDNENEIKKLLQKRLDELSKLIKQASQ.

This sequence belongs to the FliT family. In terms of assembly, homodimer. Interacts with FliD and FlhC.

It localises to the cytoplasm. Its subcellular location is the cytosol. In terms of biological role, dual-function protein that regulates the transcription of class 2 flagellar operons and that also acts as an export chaperone for the filament-capping protein FliD. As a transcriptional regulator, acts as an anti-FlhDC factor; it directly binds FlhC, thus inhibiting the binding of the FlhC/FlhD complex to class 2 promoters, resulting in decreased expression of class 2 flagellar operons. As a chaperone, effects FliD transition to the membrane by preventing its premature polymerization, and by directing it to the export apparatus. The polypeptide is Flagellar protein FliT (Photorhabdus laumondii subsp. laumondii (strain DSM 15139 / CIP 105565 / TT01) (Photorhabdus luminescens subsp. laumondii)).